A 925-amino-acid chain; its full sequence is MTPYRDVPPVSSRTHSSNRDRSQSRSRMSHESGSSVSTTSIVFDRISERVAAGDLSEKQPRGDDNEDALKDEPDNDDLETGPFLGNASGNGNSPRHAQKKGPGMDRGMRRALLIAAGLLVSAWVAGLFVYIATKSYKPASATAHDPQATIVRGSGKAVTLDQVMGSFWRPEVRSIQWIAGPEGEDGLLLERDAAGKDYLVVEDIRSQDAAAVDSSADAQAADARTLMEKGSFEYGKRVYNAVKVAPSRDLQRVLVATDVKSNWRHSSYAAYWIFDVKTQTADPLVPGEPDARIQLAQWNPTGDAVAFTRDNNLYLRKVGSDNIIQVTKDGGSEVFNGVPDWVYEEEVFSGSSATWWSEDGDYIAFLRTNETGVPEFPIDYFLKRPSGTEPKPGEEAYPETRKIKYPKAGAHNPVVELKFYDVVRGDVFSVDISGGFADDDRLITEVVWAGKQILVKETNRVSDVMRVVLVDVAARSGKTVRTTDVKAIDGGWFEITHQTKHIPADPSKGREHDGYIDLIIHGDGNHLAYFTPLDNPDPVMLTSGDWEVVDSPYAVDLDKNVVYFMATKESSIQRHVYQVKLTGEDLTAVSDTSSEGYYAASFSIGGGYALLTYQGPGIPWQKVISTPSNPRKYEHTVEENKDLADNAKKHELPIKIYGTINVDGVELNYVERRPAHFDASKKYPVLFQQYSGPGSQTVNKKFTVDFQSYVAAGLGYICVTVDGRGTGYIGRKNRVIVRGNLGQWEAHDQIAAAKIWAKKKYIDETRLAIWGWSFGGFNALKTLEQDAGETFRYGMAVAPVTDWRFYDSIYTERYMLTPQANGHGYDTSAIYNTTALGQNVRFLLMHGLADDNVHFQSSLTLLDKLNLAGVENYDVHVFPDSDHSIYFHNANRIVYDKLTNWLINAFNGEWIKVASPKPNGKRRAA.

Residues 1–104 (MTPYRDVPPV…RHAQKKGPGM (104 aa)) are disordered. Residues 1 to 110 (MTPYRDVPPV…GPGMDRGMRR (110 aa)) lie on the Cytoplasmic side of the membrane. A compositionally biased stretch (low complexity) spans 31–40 (ESGSSVSTTS). Over residues 55 to 72 (LSEKQPRGDDNEDALKDE) the composition is skewed to basic and acidic residues. A helical; Signal-anchor for type II membrane protein membrane pass occupies residues 111 to 131 (ALLIAAGLLVSAWVAGLFVYI). Residues 132–925 (ATKSYKPASA…PKPNGKRRAA (794 aa)) lie on the Vacuolar side of the membrane. N-linked (GlcNAc...) asparagine glycosylation occurs at Asn369. The active-site Charge relay system is the Ser773. N-linked (GlcNAc...) asparagine glycosylation is present at Asn832. Active-site charge relay system residues include Asp850 and His883.

This sequence belongs to the peptidase S9B family.

It localises to the vacuole membrane. The catalysed reaction is Release of an N-terminal dipeptide, Xaa-Yaa-|-Zaa-, from a polypeptide, preferentially when Yaa is Pro, provided Zaa is neither Pro nor hydroxyproline.. Type IV dipeptidyl-peptidase which removes N-terminal dipeptides sequentially from polypeptides having unsubstituted N-termini provided that the penultimate residue is proline. In Chaetomium globosum (strain ATCC 6205 / CBS 148.51 / DSM 1962 / NBRC 6347 / NRRL 1970) (Soil fungus), this protein is Probable dipeptidyl-aminopeptidase B (DAPB).